A 311-amino-acid polypeptide reads, in one-letter code: MANPLYHKHIISINDLSRDELELVLRTAASLKKTPQPELLKHKVIASCFFEASTRTRLSFETSIHRLGASVVGFSDSSNTSLGKKGETLADTMSVISTYVDAIVMRHPQEGASRLAAQFSGNVPIVNAGDGANQHPTQTLLDLFTIQETQGRLDNINIAMVGDLKYGRTVHSLTQALAKFNGNRFFFIAPDALAMPAYILQMLEEKEIEYSLHESLEEVVPELDILYMTRVQKERLDPSEYANVKAQFILRSSDLTGARDNLKVLHPLPRIDEITTDVDKTPYAYYFQQAGNGIFARQALLALVLNAELAL.

Residues arginine 55 and threonine 56 each contribute to the carbamoyl phosphate site. Residue lysine 85 coordinates L-aspartate. Carbamoyl phosphate contacts are provided by arginine 106, histidine 135, and glutamine 138. Positions 168 and 230 each coordinate L-aspartate. Carbamoyl phosphate contacts are provided by leucine 268 and proline 269.

The protein belongs to the aspartate/ornithine carbamoyltransferase superfamily. ATCase family. As to quaternary structure, heterododecamer (2C3:3R2) of six catalytic PyrB chains organized as two trimers (C3), and six regulatory PyrI chains organized as three dimers (R2).

The catalysed reaction is carbamoyl phosphate + L-aspartate = N-carbamoyl-L-aspartate + phosphate + H(+). It participates in pyrimidine metabolism; UMP biosynthesis via de novo pathway; (S)-dihydroorotate from bicarbonate: step 2/3. Its function is as follows. Catalyzes the condensation of carbamoyl phosphate and aspartate to form carbamoyl aspartate and inorganic phosphate, the committed step in the de novo pyrimidine nucleotide biosynthesis pathway. The chain is Aspartate carbamoyltransferase catalytic subunit from Yersinia pseudotuberculosis serotype O:1b (strain IP 31758).